We begin with the raw amino-acid sequence, 499 residues long: Ribose import ATP-binding protein RbsA (499 aa).

2 consecutive ABC transporter domains span residues 3–240 and 250–494; these read VEMT…VGRA and LTPG…TGGD. An ATP-binding site is contributed by 35-42; it reads GENGAGKS.

The protein belongs to the ABC transporter superfamily. Ribose importer (TC 3.A.1.2.1) family. In terms of assembly, the complex is composed of an ATP-binding protein (RbsA), two transmembrane proteins (RbsC) and a solute-binding protein (RbsB).

It localises to the cell membrane. The enzyme catalyses D-ribose(out) + ATP + H2O = D-ribose(in) + ADP + phosphate + H(+). Part of the ABC transporter complex RbsABC involved in ribose import. Responsible for energy coupling to the transport system. The polypeptide is Ribose import ATP-binding protein RbsA (Halalkalibacterium halodurans (strain ATCC BAA-125 / DSM 18197 / FERM 7344 / JCM 9153 / C-125) (Bacillus halodurans)).